Consider the following 97-residue polypeptide: Protein MxiI (97 aa).

The protein to S.typhimurium PrgJ.

Necessary for the secretion of IPA invasins. The protein is Protein MxiI (mxiI) of Shigella flexneri.